Reading from the N-terminus, the 252-residue chain is 3-deoxy-manno-octulosonate cytidylyltransferase (252 aa).

The protein belongs to the KdsB family.

The protein resides in the cytoplasm. The catalysed reaction is 3-deoxy-alpha-D-manno-oct-2-ulosonate + CTP = CMP-3-deoxy-beta-D-manno-octulosonate + diphosphate. It functions in the pathway nucleotide-sugar biosynthesis; CMP-3-deoxy-D-manno-octulosonate biosynthesis; CMP-3-deoxy-D-manno-octulosonate from 3-deoxy-D-manno-octulosonate and CTP: step 1/1. It participates in bacterial outer membrane biogenesis; lipopolysaccharide biosynthesis. Activates KDO (a required 8-carbon sugar) for incorporation into bacterial lipopolysaccharide in Gram-negative bacteria. This is 3-deoxy-manno-octulosonate cytidylyltransferase from Nitratidesulfovibrio vulgaris (strain DP4) (Desulfovibrio vulgaris).